The sequence spans 314 residues: 4-hydroxy-3-methylbut-2-enyl diphosphate reductase (314 aa).

Cys-12 serves as a coordination point for [4Fe-4S] cluster. 2 residues coordinate (2E)-4-hydroxy-3-methylbut-2-enyl diphosphate: His-41 and His-74. Positions 41 and 74 each coordinate dimethylallyl diphosphate. Residues His-41 and His-74 each contribute to the isopentenyl diphosphate site. Cys-96 provides a ligand contact to [4Fe-4S] cluster. His-124 contributes to the (2E)-4-hydroxy-3-methylbut-2-enyl diphosphate binding site. Position 124 (His-124) interacts with dimethylallyl diphosphate. His-124 contacts isopentenyl diphosphate. Catalysis depends on Glu-126, which acts as the Proton donor. (2E)-4-hydroxy-3-methylbut-2-enyl diphosphate is bound at residue Thr-168. Residue Cys-198 coordinates [4Fe-4S] cluster. (2E)-4-hydroxy-3-methylbut-2-enyl diphosphate contacts are provided by Ser-226, Ser-227, Asn-228, and Ser-270. The dimethylallyl diphosphate site is built by Ser-226, Ser-227, Asn-228, and Ser-270. Ser-226, Ser-227, Asn-228, and Ser-270 together coordinate isopentenyl diphosphate.

It belongs to the IspH family. [4Fe-4S] cluster is required as a cofactor.

The catalysed reaction is isopentenyl diphosphate + 2 oxidized [2Fe-2S]-[ferredoxin] + H2O = (2E)-4-hydroxy-3-methylbut-2-enyl diphosphate + 2 reduced [2Fe-2S]-[ferredoxin] + 2 H(+). The enzyme catalyses dimethylallyl diphosphate + 2 oxidized [2Fe-2S]-[ferredoxin] + H2O = (2E)-4-hydroxy-3-methylbut-2-enyl diphosphate + 2 reduced [2Fe-2S]-[ferredoxin] + 2 H(+). The protein operates within isoprenoid biosynthesis; dimethylallyl diphosphate biosynthesis; dimethylallyl diphosphate from (2E)-4-hydroxy-3-methylbutenyl diphosphate: step 1/1. It participates in isoprenoid biosynthesis; isopentenyl diphosphate biosynthesis via DXP pathway; isopentenyl diphosphate from 1-deoxy-D-xylulose 5-phosphate: step 6/6. Its function is as follows. Catalyzes the conversion of 1-hydroxy-2-methyl-2-(E)-butenyl 4-diphosphate (HMBPP) into a mixture of isopentenyl diphosphate (IPP) and dimethylallyl diphosphate (DMAPP). Acts in the terminal step of the DOXP/MEP pathway for isoprenoid precursor biosynthesis. In Pseudomonas aeruginosa (strain ATCC 15692 / DSM 22644 / CIP 104116 / JCM 14847 / LMG 12228 / 1C / PRS 101 / PAO1), this protein is 4-hydroxy-3-methylbut-2-enyl diphosphate reductase.